A 234-amino-acid polypeptide reads, in one-letter code: Sugar fermentation stimulation protein homolog (234 aa).

The protein belongs to the SfsA family.

In Shewanella pealeana (strain ATCC 700345 / ANG-SQ1), this protein is Sugar fermentation stimulation protein homolog.